The sequence spans 221 residues: Factor arrest protein 7 (221 aa).

As to quaternary structure, component of a complex at least composed of FAR3, FAR7, FAR8, FAR10, FAR11 and VPS64.

In terms of biological role, participates in the control of the reentry into the cell cycle following pheromone treatment. The chain is Factor arrest protein 7 (FAR7) from Saccharomyces cerevisiae (strain ATCC 204508 / S288c) (Baker's yeast).